The following is a 124-amino-acid chain: Small ribosomal subunit protein uS12 (124 aa).

Asp89 is modified (3-methylthioaspartic acid).

It belongs to the universal ribosomal protein uS12 family. In terms of assembly, part of the 30S ribosomal subunit. Contacts proteins S8 and S17. May interact with IF1 in the 30S initiation complex.

Its function is as follows. With S4 and S5 plays an important role in translational accuracy. Functionally, interacts with and stabilizes bases of the 16S rRNA that are involved in tRNA selection in the A site and with the mRNA backbone. Located at the interface of the 30S and 50S subunits, it traverses the body of the 30S subunit contacting proteins on the other side and probably holding the rRNA structure together. The combined cluster of proteins S8, S12 and S17 appears to hold together the shoulder and platform of the 30S subunit. The polypeptide is Small ribosomal subunit protein uS12 (Erwinia amylovora (Fire blight bacteria)).